A 592-amino-acid polypeptide reads, in one-letter code: N-acetyltransferase ESCO2 (592 aa).

Phosphoserine is present on residues serine 41 and serine 85. The interval 267-294 is disordered; the sequence is KSSVKVQNARSKNEEKLRKNPSGAVVSS. Phosphoserine is present on serine 309. The segment at 384–408 adopts a CCHH-type zinc-finger fold; it reads TVCKSCGMIYTASNPEDEIQHLQHH.

Belongs to the acetyltransferase family. ECO subfamily.

It is found in the nucleus. It localises to the chromosome. It carries out the reaction L-lysyl-[protein] + acetyl-CoA = N(6)-acetyl-L-lysyl-[protein] + CoA + H(+). In terms of biological role, acetyltransferase required for the establishment of sister chromatid cohesion. Couples the processes of cohesion and DNA replication to ensure that only sister chromatids become paired together. In contrast to the structural cohesins, the deposition and establishment factors are required only during the S phase. Acetylates the cohesin component SMC3. The chain is N-acetyltransferase ESCO2 (Esco2) from Mus musculus (Mouse).